The sequence spans 515 residues: Cytochrome P450 monooxygenase paxP (515 aa).

The helical transmembrane segment at 20–36 threads the bilayer; that stretch reads SLLWKLGVFAVLVYFLL. Residue C456 participates in heme binding.

It belongs to the cytochrome P450 family. Requires heme as cofactor.

It localises to the membrane. Its pathway is secondary metabolite biosynthesis. In terms of biological role, cytochrome P450 monooxygenase; part of the ATM2 gene cluster that mediates the biosynthesis of paxilline, a mycotoxin that acts as an inhibitor of mammalian maxi-K channels. PaxG, the geranylgeranyl diphosphate (GGPP) synthase is proposed to catalyze the first step in paxilline biosynthesis. Condensation of indole-3-glycerol phosphate with GGPP by paxC then forms 3-geranylgeranylindole (3-GGI), followed by epoxidation and cyclization of this intermediate (by paxM and paxB) to form paspaline. Paspaline is subsequently converted to 13-desoxypaxilline by paxP, the latter being then converted to paxilline by paxQ. Finally paxilline can be mono- and di-prenylated by paxD. PaxP can also utilized beta-paxitriol and alpha-PC-M6 as substrates converting them to paxilline. In Penicillium paxilli, this protein is Cytochrome P450 monooxygenase paxP.